The primary structure comprises 885 residues: DNA mismatch repair protein MutS (885 aa).

626–633 (GPNMGGKS) provides a ligand contact to ATP.

The protein belongs to the DNA mismatch repair MutS family.

Functionally, this protein is involved in the repair of mismatches in DNA. It is possible that it carries out the mismatch recognition step. This protein has a weak ATPase activity. In Burkholderia orbicola (strain MC0-3), this protein is DNA mismatch repair protein MutS.